The sequence spans 249 residues: tRNA (guanine-N(1)-)-methyltransferase (249 aa).

S-adenosyl-L-methionine is bound by residues G121 and 141-146 (LGDFVL).

It belongs to the RNA methyltransferase TrmD family. Homodimer.

Its subcellular location is the cytoplasm. It catalyses the reaction guanosine(37) in tRNA + S-adenosyl-L-methionine = N(1)-methylguanosine(37) in tRNA + S-adenosyl-L-homocysteine + H(+). Functionally, specifically methylates guanosine-37 in various tRNAs. This Cereibacter sphaeroides (strain ATCC 17023 / DSM 158 / JCM 6121 / CCUG 31486 / LMG 2827 / NBRC 12203 / NCIMB 8253 / ATH 2.4.1.) (Rhodobacter sphaeroides) protein is tRNA (guanine-N(1)-)-methyltransferase.